A 219-amino-acid polypeptide reads, in one-letter code: UPF0376 protein C36C5.12 (219 aa).

Residues 1–20 (MGRLDVKNSWIEFHQDEMTS) lie on the Cytoplasmic side of the membrane. The helical; Signal-anchor for type II membrane protein transmembrane segment at 21–43 (FLKLAIIGTVLLGVAHGANLTAA) threads the bilayer. Over 44–219 (EKETYCELRS…VSKCDFSRLG (176 aa)) the chain is Extracellular. N-linked (GlcNAc...) asparagine glycans are attached at residues Asn104 and Asn204.

It belongs to the UPF0376 family.

Its subcellular location is the membrane. This is UPF0376 protein C36C5.12 from Caenorhabditis elegans.